A 192-amino-acid chain; its full sequence is Imidazoleglycerol-phosphate dehydratase (192 aa).

It belongs to the imidazoleglycerol-phosphate dehydratase family.

It localises to the cytoplasm. The enzyme catalyses D-erythro-1-(imidazol-4-yl)glycerol 3-phosphate = 3-(imidazol-4-yl)-2-oxopropyl phosphate + H2O. It participates in amino-acid biosynthesis; L-histidine biosynthesis; L-histidine from 5-phospho-alpha-D-ribose 1-diphosphate: step 6/9. This Vesicomyosocius okutanii subsp. Calyptogena okutanii (strain HA) protein is Imidazoleglycerol-phosphate dehydratase.